Here is a 1136-residue protein sequence, read N- to C-terminus: Pesticidal crystal protein Cry4B protoxin (1136 aa).

Residues 84–282 (TPERVWNDFM…PADKIDNTKL (199 aa)) are domain I. The interval 283 to 466 (SKTEFTREIY…SNRVSFAWTH (184 aa)) is domain II. Residues 467–641 (KIVDPNNQIY…PITQSVLDET (175 aa)) form a domain III region.

It belongs to the delta endotoxin family. As to quaternary structure, in the presence of micelles active toxin forms oligomers that can be fit into cryo-EM maps as trimers. Binds to host (A.gambiae) cadherin AgCad1 (also called BT-R3), probably on the cell surface. Activated toxin may bind its host AgCad1 receptor as a monomer, but also forms an oligomer that is not active. Mg(2+) serves as cofactor. Post-translationally, treatment of recombinant protein with A.aegypti 3rd instar larvae midgut extract for 1 hour yields major bands of 72 and 45 kDa, the combined proteins are toxic to mosquitoes. Longer digestion, which removes the 72 kDa protein, yields a non-toxic preparation. Proteolysis by yields a 65 kDa toxic protein and 48 and 17 kDa fragments which are not toxic. In terms of tissue distribution, host (A.gambiae) larval midgut; binds to host brush border membranes, probably to cadherin-AgCad1 (Cad1, also called BT-R3).

Its subcellular location is the spore. With respect to regulation, toxic activity on Trichoplusia ni insect cells stably transfected with the AgCad1/BT-R3 receptor leads to oncosis, cell death characterized by cell swelling, membrane blebbing and depletion of energy reserves. Cell death is blocked by EDTA (but not EGTA) and is partially prevented by pretreatment with NF449 (inhibits G-s-alpha-60A and adenylyl cyclase, AC) and 2',5'-dideoxyadenosine 3'-diphosphate (ddADP, inhibits AC), while H-89 and PKAI 14-22 (both inhibit protein kinase A), ouabain (inhibits Na+/K+-ATPase) and a cell exocytosis inhibitor (Exo1) nearly completely prevent the action of the toxin in this system. The cAMP analog pCPT-cAMP and the AC activator FSK enhance toxicity. In terms of biological role, a pesticidal protein active against Aedes and Anopheles mosquito species; activity on Culex species is strain dependent. It remains toxic to permethrin-resistant strains of A.gambiae. Following activation of the protoxin by mosquito larvae midgut extract (or by chymotrypsin or trypsin treatment) it becomes insecticidal. Causes mosquito cell death by activating a host G-protein-coupled receptor which subsequently activates adenylyl cyclase and increases cAMP production. cAMP activates protein kinase A which sets off a series of downstream events which includes increased exocytosis (probably bringing more receptor to the cell membrane), Na+/K+-ATPase activation and eventual host cell death. Another group suggests that alkaline phosphatase serves as the insect receptor and that the protein forms pores in insect cell membranes. The protein is Pesticidal crystal protein Cry4B protoxin of Bacillus thuringiensis subsp. israelensis.